Consider the following 298-residue polypeptide: Mitochondrial substrate carrier family protein N (298 aa).

Residues 1–13 are Mitochondrial intermembrane-facing; it reads MAGDLTPSLFLKY. Solcar repeat units lie at residues 8-92, 104-188, and 207-290; these read SLFL…FKKT, FRIP…TAEN, and QKLS…IKQM. A helical transmembrane segment spans residues 14–34; the sequence is GFGGALSCSITHSLVVPLDVV. Residues 35-60 lie on the Mitochondrial matrix side of the membrane; the sequence is KTLLQTNPGKYTGMMNGFSTVIKEQG. Residues 61-81 traverse the membrane as a helical segment; sequence PSGLLQGLGPTAVGYALQGFL. The Mitochondrial intermembrane segment spans residues 82 to 105; sequence KFGFYEVFKKTYADAVGEKADQFR. Residues 106–126 traverse the membrane as a helical segment; the sequence is IPIWLAASATAEVIADIALCP. The Mitochondrial matrix portion of the chain corresponds to 127-162; it reads NEAVRIRLVAEPTFAKSPVEAFGKIFKQEGVLGFYK. A helical transmembrane segment spans residues 163 to 179; the sequence is GLPPILLKQVPYTMAKF. At 180–208 the chain is on the mitochondrial intermembrane side; it reads AVFEFTAENVYKGLAASGKPKESLTDGQK. A helical transmembrane segment spans residues 209–229; the sequence is LSVSLGSGIVAGIVAAIVSQP. The Mitochondrial matrix portion of the chain corresponds to 230–262; it reads ADTILSKINQEKTDGGVVKAIGNIMRRLGVRGL. A helical membrane pass occupies residues 263–283; sequence FLGLPTRCFMVGTLTAGQFFI. Topologically, residues 284 to 298 are mitochondrial intermembrane; sequence YDGIKQMLGLTPAKK.

Belongs to the mitochondrial carrier (TC 2.A.29) family.

It localises to the mitochondrion inner membrane. Its function is as follows. Mitochondrial solute carriers shuttle metabolites, nucleotides, and cofactors through the mitochondrial inner membrane. Transports phosphate groups from the cytosol to the mitochondrial matrix. Phosphate is cotransported with H(+). This chain is Mitochondrial substrate carrier family protein N (mcfN), found in Dictyostelium discoideum (Social amoeba).